The sequence spans 577 residues: Torulene dioxygenase (577 aa).

The disordered stretch occupies residues 1–20 (MALNGPGVYHRTREHEQEDA). Fe(2+)-binding residues include His239, His291, His361, and His570.

Belongs to the carotenoid oxygenase family. Fe(2+) is required as a cofactor.

The protein resides in the cytoplasm. The protein localises to the cytosol. It carries out the reaction torulene + O2 = 4'-apo-beta-carotenal + 3-methyl-2-butenal. The protein operates within carotenoid biosynthesis. Functionally, torulene dioxygenase; part of pathway that mediates the biosynthesis of neurosporaxanthin, a carboxylic apocarotenoid acting as an essential protective pigments and leading to orange pigmentation. CarT mediates the cleavage of torulene into beta-apo-4'-carotenal, the aldehyde corresponding to the acidic neurosporaxanthin. Is also active on other monocyclic synthetic substrates such as beta-apo-8'-carotenal and beta-apo-10'-carotenal to produce beta-apo-14'-carotenal and retinal(beta-apo-15'-carotenal), respectively. Neurosporaxanthin is synthesized from geranyl-geranyl pyrophosphate (GGPP) through several enzymatic activities. Phytoene synthase activity performed by the bifunctional enzyme carAR first produces phytoene from geranyl-geranyl pyrophosphate (GGPP). The phytoene dehydrogenase carB then introduces 4 desaturations to lead to lycopene which is substrate of the carotene cyclase activity of carAR that leads to the production of gamma-carotene. CarB then performs a 5th desaturation reaction to yield torulene. Torulene is the substrate of the dioxidase carT that breaks the molecule, removing five carbon atoms to yield beta-apo-4'-carotenal, whereas the aldehyde dehydrogenase carD mediates the last step by converting beta-apo-4'-carotenal into neurosporaxanthin. The protein is Torulene dioxygenase of Gibberella fujikuroi (strain CBS 195.34 / IMI 58289 / NRRL A-6831) (Bakanae and foot rot disease fungus).